The following is a 52-amino-acid chain: Protein RepA (52 aa).

The H-T-H motif DNA-binding region spans 20–40 (KLEELAQKYGMTKSGLVNFLV).

Belongs to the transcriptional regulatory CopG/NikR family. As to quaternary structure, homodimer.

Its function is as follows. Regulates the plasmid copy number. RepA binds to the repAB promoter thus controlling the synthesis of the plasmid replication initiator protein RepB. The sequence is that of Protein RepA (repA) from Lactiplantibacillus plantarum (Lactobacillus plantarum).